The following is a 182-amino-acid chain: Gas vesicle protein H1 (182 aa).

A compositionally biased stretch (acidic residues) spans 1–11 (MVPDENDDASD). 2 disordered regions span residues 1-21 (MVPD…SGLL) and 65-106 (GRAD…GGTS). Residues 12-21 (DQSSQLSGLL) show a composition bias toward low complexity. Over residues 92–101 (TTEDSIHVET) the composition is skewed to basic and acidic residues.

It belongs to the gas vesicle GvpH family. In terms of assembly, gvpF to GvpM interact with each other in vitro, and may form multi-subunit complex(es). Interacts with GvpC1. Might interact with GvpA1.

It is found in the cytoplasm. It localises to the gas vesicle. Its function is as follows. Proteins GvpF to GvpM might be involved in nucleating gas vesicle formation. May be important for the stability of gas vesicles. Gas vesicles are hollow, gas filled proteinaceous nanostructures found in several microbial planktonic microorganisms. They allow positioning of halobacteria at the optimal depth for growth in the poorly aerated, shallow brine pools of their habitat. In terms of biological role, expression of a 9.5 kb p-vac DNA fragment containing 2 divergently transcribed regions (gvpD-gvpE-gvpF-gvpG-gvpH-gvpI-gvpJ-gvpK-gvpL-gvpM and gvpA-gvpC-gvpN-gvpO) allows H.volcanii to produce gas vesicles. A similar region restores gas vesicle production in H.halobium without the p-vac locus, but it still has the c-vac locus. The polypeptide is Gas vesicle protein H1 (gvpH11) (Halobacterium salinarum (strain ATCC 700922 / JCM 11081 / NRC-1) (Halobacterium halobium)).